Consider the following 390-residue polypeptide: Protein TAB2 homolog, chloroplastic (390 aa).

The N-terminal 69 residues, methionine 1–glutamate 69, are a transit peptide targeting the chloroplast. Residues arginine 16 to asparagine 85 are disordered. Over residues serine 61–aspartate 75 the composition is skewed to low complexity.

The protein localises to the plastid. It localises to the chloroplast. In terms of biological role, nuclear genome-encoded factor involved in the biogenesis of photosystem I (PSI). Required for the accumulation of PSI during plant development. Does not seem to be required for the translation of mRNAs of the PSI subunits. The polypeptide is Protein TAB2 homolog, chloroplastic (Zea mays (Maize)).